The primary structure comprises 587 residues: Zinc finger protein 69 (587 aa).

Residues 42-128 (NGTQQESLAD…TPGTTAAGSQ (87 aa)) are disordered. Positions 76 to 147 (HDEATPGTPA…VDLSQEEWGQ (72 aa)) constitute a KRAB domain. 9 consecutive C2H2-type zinc fingers follow at residues 271 to 293 (HKKK…ILEQ), 299 to 321 (KPAR…CMRA), 327 to 349 (NVCE…HTGE), 355 to 377 (KECG…HTGE), 383 to 405 (EECG…HTGE), 411 to 433 (DKCQ…HSGE), 439 to 461 (SECG…HTGE), 467 to 489 (TSCC…HTGE), and 495 to 517 (KECG…HTGV). The interval 564–587 (SRHQKIHRRNTFRDDPGHENKRQL) is disordered. A compositionally biased stretch (basic and acidic residues) spans 574–587 (TFRDDPGHENKRQL).

This sequence belongs to the krueppel C2H2-type zinc-finger protein family.

The protein localises to the nucleus. Putative transcription factor that appears to regulate lipid metabolism. This is Zinc finger protein 69 from Mus musculus (Mouse).